Reading from the N-terminus, the 1054-residue chain is Disks large-associated protein 2 (1054 aa).

Disordered regions lie at residues 32–87 (EPEE…SGSR) and 242–301 (SHSL…SDDN). The span at 242–255 (SHSLEGSSKSNANG) shows a compositional bias: polar residues. A compositionally biased stretch (basic residues) spans 267 to 281 (HAHHAKHSKRSKSKE). Low complexity predominate over residues 289 to 299 (RPGMSSWWSSD). A phosphoserine mark is found at serine 298, serine 304, serine 386, and serine 452. Disordered stretches follow at residues 442–464 (GDEESGESDSSPKTSPKSAILPE) and 609–666 (YKKT…TDSL). Positions 628-641 (VTAQSSTESTQDAY) are enriched in polar residues. Phosphoserine is present on residues serine 662, serine 665, serine 668, and serine 715. The interval 719–746 (QDSEFPEHQPYPRSDVETATDSDTESRG) is disordered. Threonine 738 carries the phosphothreonine modification. A phosphoserine mark is found at serine 740, serine 771, serine 806, serine 978, and serine 1007. Composition is skewed to basic and acidic residues over residues 977-987 (ESPERKEERKV) and 1002-1020 (ITREKSLDLPDRQRQEARR). The tract at residues 977–1021 (ESPERKEERKVPPPIPKKPPKGKFPITREKSLDLPDRQRQEARRR) is disordered.

This sequence belongs to the SAPAP family. Interacts with DLG1 and DLG4/PSD-95. In terms of tissue distribution, expressed in brain and kidney.

It localises to the cell membrane. The protein resides in the postsynaptic density. Its subcellular location is the synapse. May play a role in the molecular organization of synapses and neuronal cell signaling. Could be an adapter protein linking ion channel to the subsynaptic cytoskeleton. May induce enrichment of PSD-95/SAP90 at the plasma membrane. The sequence is that of Disks large-associated protein 2 from Homo sapiens (Human).